The sequence spans 412 residues: Poly-beta-1,6-N-acetyl-D-glucosamine synthase (412 aa).

4 helical membrane passes run 6-26 (FLLF…IYFY), 298-318 (IISI…FITA), 332-352 (IFLL…TVAL), and 366-386 (LIFV…VVLV).

This sequence belongs to the glycosyltransferase 2 family.

It is found in the cell membrane. N-acetylglucosaminyltransferase that catalyzes the polymerization of single monomer units of UDP-N-acetylglucosamine to produce the linear homomer poly-beta-1,6-N-acetyl-D-glucosamine (PNAG, also referred to as PIA), a biofilm adhesin polysaccharide. Requires IcaD for full activity. This is Poly-beta-1,6-N-acetyl-D-glucosamine synthase (icaA) from Staphylococcus aureus (strain NCTC 8325 / PS 47).